The sequence spans 795 residues: MVIMPFVHYIDEENFDDKLKEWTLGLNSDYVNPYDSGETQYINSNYPWPANINSLSSKICEMGLIEMDGVEIRSVPLHWVSTVSVPTAPSSSFVFNIPSMFQECMYECHIYNLPPDAGVTATYNAYFDNNFPIPYKYTLTIQTSADDMFNNQDYKIWMNGTWGPSFHIPESGTKILEFPIKYGKLNISFGISGSSLTVTLMWIIENNNINDFFDPDTEDYWQLIGRNINIVFGNFLPKHFPRGYINPIQNRTYLEKRILNTGDASNPTTIEYLWGSVTLLPDLESWQFYDDKGNSVDSKYATISDDGYVSIYYEEMIKDGYFPKAIYLWTVHKESYLEAEPSIGTFERNEESGVSERCDFDIIAFKKKYTGNLLTCVPLIVYFRPCEVPLGDINKWGWQPYIYYFDTYNVKPYCEKFIVRPKCICYRNSDPNEKTITFDIEYEINVDTKYLGWFQPELRLYYGGVLVDSKTGDVSNFTYTFRMPQNTIETYEMKLFIGGVEVAKEQIIVERQKYCHSLSIEAKTYDKEGNETDKFPHPTSADYDENKHSEIIVKIKIKDEQGNYIDVPIENIFINWQYPLNKINTGIYEVRIPNTADNALNIQDYGIAIYIDKDWCDENGYYNKYNIEAENVIINSDKIERIGLWNFEGITGYENGTTLLNQVYETVSGTFVNPICEFSVVEQLNEDRDLKQYSYCYRIYGSPMTLNLPTYTDDELKELAKAIVREMGQPRKIETFTILSKELQKINSSITVDYNGQLISMPVYSVRFSLENSNIQIQIRNDQLKLLKDYLSLIK.

This is an uncharacterized protein from Methanocaldococcus jannaschii (strain ATCC 43067 / DSM 2661 / JAL-1 / JCM 10045 / NBRC 100440) (Methanococcus jannaschii).